We begin with the raw amino-acid sequence, 167 residues long: Swarming motility protein SwrB (167 aa).

The interval 63–105 (IENKASSASQSDEESQKSGLQTSETYQERDPVQEAENLPEHIE) is disordered. Residues 88-105 (YQERDPVQEAENLPEHIE) show a composition bias toward basic and acidic residues.

Its function is as follows. Required for swarming motility and for maximal sigma-D activity. This Bacillus subtilis (strain 168) protein is Swarming motility protein SwrB (swrB).